A 278-amino-acid polypeptide reads, in one-letter code: Pre-hexon-linking protein VIII (278 aa).

A propeptide spanning residues 114-199 (SPSLLSGGAS…ILRYRRLGQQ (86 aa)) is cleaved from the precursor.

The protein belongs to the adenoviridae hexon-linking protein family. As to quaternary structure, interacts with the peripentonal hexons as well as the hexons in the facets. Part of a complex composed of the core-capsid bridging protein, the endosome lysis protein VI and the hexon-linking protein VIII; these interactions bridge the virus core to the capsid. Post-translationally, cleaved by the viral protease during virion maturation. May cause the middle segment to be shed from the capsid.

The protein resides in the virion. It localises to the host nucleus. Its function is as follows. Structural component of the virion that acts as a cement protein on the capsid interior and which glue the peripentonal hexons and group-of-nine hexons together. In Pantherophis guttatus (Corn snake), this protein is Pre-hexon-linking protein VIII.